The primary structure comprises 196 residues: MLDFIKGEIVELIPDSVIIETGNIGYMLFISLNTYFSLTKIKSCKLYIYEVIREETHQLFGFIDKKERQLFTHLISVPGVGANIARMVLSSLSVCELEEIIFSGNVSALQALKGIGNKTAERIIIDLKDKVKPDNIPSSDTIITNISSNITKEAITALITLGFSQSASQKVVNKIVSNNSSSTTIEQIIKKALKLL.

The segment at 1–63 is domain I; the sequence is MLDFIKGEIV…EETHQLFGFI (63 aa). Residues 64–142 are domain II; the sequence is DKKERQLFTH…PDNIPSSDTI (79 aa). The flexible linker stretch occupies residues 143 to 146; that stretch reads ITNI. A domain III region spans residues 146-196; that stretch reads ISSNITKEAITALITLGFSQSASQKVVNKIVSNNSSSTTIEQIIKKALKLL.

It belongs to the RuvA family. In terms of assembly, homotetramer. Forms an RuvA(8)-RuvB(12)-Holliday junction (HJ) complex. HJ DNA is sandwiched between 2 RuvA tetramers; dsDNA enters through RuvA and exits via RuvB. An RuvB hexamer assembles on each DNA strand where it exits the tetramer. Each RuvB hexamer is contacted by two RuvA subunits (via domain III) on 2 adjacent RuvB subunits; this complex drives branch migration. In the full resolvosome a probable DNA-RuvA(4)-RuvB(12)-RuvC(2) complex forms which resolves the HJ.

The protein resides in the cytoplasm. Functionally, the RuvA-RuvB-RuvC complex processes Holliday junction (HJ) DNA during genetic recombination and DNA repair, while the RuvA-RuvB complex plays an important role in the rescue of blocked DNA replication forks via replication fork reversal (RFR). RuvA specifically binds to HJ cruciform DNA, conferring on it an open structure. The RuvB hexamer acts as an ATP-dependent pump, pulling dsDNA into and through the RuvAB complex. HJ branch migration allows RuvC to scan DNA until it finds its consensus sequence, where it cleaves and resolves the cruciform DNA. The chain is Holliday junction branch migration complex subunit RuvA from Azobacteroides pseudotrichonymphae genomovar. CFP2.